A 160-amino-acid polypeptide reads, in one-letter code: Cyanate hydratase (160 aa).

Residues Arg100, Glu103, and Ser126 contribute to the active site.

This sequence belongs to the cyanase family.

It carries out the reaction cyanate + hydrogencarbonate + 3 H(+) = NH4(+) + 2 CO2. Functionally, catalyzes the reaction of cyanate with bicarbonate to produce ammonia and carbon dioxide. The sequence is that of Cyanate hydratase from Neosartorya fischeri (strain ATCC 1020 / DSM 3700 / CBS 544.65 / FGSC A1164 / JCM 1740 / NRRL 181 / WB 181) (Aspergillus fischerianus).